The chain runs to 1260 residues: Ankyrin repeat and sterile alpha motif domain-containing protein 1B (1260 aa).

ANK repeat units follow at residues 2 to 31 (GKDQ…GGIL), 58 to 87 (SGYT…STNV), 91 to 120 (KGYF…SHSR), 127 to 156 (ENET…DPTI), 160 to 189 (KLET…NLMS), 193 to 222 (RKHT…DVSC), and 225 to 254 (EKGS…DANI). Residues 298 to 326 (HAQEDTAQETRLSSPAQSPSQKTKSETVT) form a disordered region. Polar residues predominate over residues 306–326 (ETRLSSPAQSPSQKTKSETVT). A phosphoserine mark is found at Ser310, Ser311, Ser315, Ser354, and Ser365. Disordered stretches follow at residues 368 to 402 (ELGK…SCGP), 491 to 513 (PGTG…PSPD), and 556 to 642 (GCTS…EASL). A compositionally biased stretch (polar residues) spans 372-385 (NGSQSVRTSSTINL). Thr504 carries the post-translational modification Phosphothreonine. Residues Ser508 and Ser511 each carry the phosphoserine modification. Low complexity predominate over residues 556–575 (GCTSFTSSPPVSPPTSSVET). Residues 576–588 (TEIKNEGAEHTDD) are compositionally biased toward basic and acidic residues. Phosphoserine is present on Ser739. Residues 754-778 (VNWSKSSTAERSSKDNSERTPSFTS) form a disordered region. Thr773 carries the phosphothreonine modification. Ser775 bears the Phosphoserine mark. 2 consecutive SAM domains span residues 810-876 (CPVQ…LPKM) and 884-949 (YHPT…RLHE). Phosphotyrosine is present on Tyr901. The Nuclear localization signal motif lies at 935 to 938 (HRKR). Positions 946-989 (RLHEDPPQKPPRSITLREPSGNHTPPQLSPSLSQSTYTTGGSLD) are disordered. Over residues 969–984 (TPPQLSPSLSQSTYTT) the composition is skewed to low complexity. Position 974 is a phosphoserine (Ser974). At Tyr1007 the chain carries Phosphotyrosine. Positions 1056–1213 (IFQSCDYKAF…SFENKPSKPI (158 aa)) constitute a PID domain. Residues 1197–1217 (HSSTLPESFENKPSKPIPKPR) are disordered.

As to quaternary structure, interacts with EPHA8. Isoform 2 interacts with COIL. Isoform 3 interacts with DLG4. Post-translationally, nuclear translocation of isoform 3 requires an NMDAR-dependent proteolytic cleavage. A 35 kDa N-terminal form shuttles to the nucleus. Isoform 3 is brain specific and highly enriched in the postsynaptic densities (PSDs), especially in cortical, striatal and hippocampal PSDs.

It is found in the cytoplasm. The protein resides in the nucleus. The protein localises to the postsynaptic density. It localises to the cell projection. Its subcellular location is the dendritic spine. It is found in the cajal body. In terms of biological role, isoform 2 may participate in the regulation of nucleoplasmic coilin protein interactions in neuronal and transformed cells. Functionally, isoform 3 can regulate global protein synthesis by altering nucleolar numbers. This chain is Ankyrin repeat and sterile alpha motif domain-containing protein 1B (Anks1b), found in Rattus norvegicus (Rat).